The sequence spans 463 residues: MALPGSLNRYLLLMAQEHLEFRLPEIKSLLSVIGGQFTNSQETYGKSPFWILNIPSEDIARNLMKRTVCAKSLFELWGHGKSPEELYSSLKSYPVEKMVPFLHSDSTYKIKIHTFNKTLTQEEKVKRIDALEFLPFEGKVNLKKPQHVFSILEDYGLDPNCIPENPHNIYFGRWIADGQRELIESYSVKKRHFIGNTSMDAGLSFIMANHAKVKENDLVFDPFVGTGGLLIASAHFGAYVCGTDIDYNTVHGLGKASRKNQKWRGPDENIRANLRQYGLEKFYLDVLVSDASKPSWRKGTYFDAIITDPPYGIRESTRRTGSQKEILKGIEKCPESHVPVSLTYHLSDMFLDLINFAAETLVLGGRLVYWLPVYTPEYTEKMVPWHPCLRLVSNCEQKLSSHTARRLITMEKVKEFENPDEYSRLLSDHFLPYQGHNSFREKYFSGVTKRIATEEQCSHEGKL.

Position 2 is an N-acetylalanine (A2).

It belongs to the class I-like SAM-binding methyltransferase superfamily. TRM11 methyltransferase family. Part of the heterodimeric TRMT11-TRM112 methyltransferase complex; this complex forms an active tRNA methyltransferase, where TRMT112 acts as an activator of the catalytic subunit TRMT11.

The protein resides in the cytoplasm. The enzyme catalyses guanosine(10) in tRNA + S-adenosyl-L-methionine = N(2)-methylguanosine(10) in tRNA + S-adenosyl-L-homocysteine + H(+). Functionally, catalytic subunit of the TRMT11-TRM112 methyltransferase complex, that specifically mediates the S-adenosyl-L-methionine-dependent N(2)-methylation of guanosine nucleotide at position 10 (m2G10) in tRNAs. This is one of the major tRNA (guanine-N(2))-methyltransferases. This chain is tRNA (guanine(10)-N(2))-methyltransferase TRMT11, found in Rattus norvegicus (Rat).